A 296-amino-acid polypeptide reads, in one-letter code: uncharacterized protein (296 aa).

2 CBS domains span residues 176 to 232 and 236 to 292; these read GIKE…DKKV and MRRD…KFPE.

This is an uncharacterized protein from Methanocaldococcus jannaschii (strain ATCC 43067 / DSM 2661 / JAL-1 / JCM 10045 / NBRC 100440) (Methanococcus jannaschii).